The primary structure comprises 273 residues: Large ribosomal subunit protein uL2 (273 aa).

The segment at 221 to 262 (RGTAMNPVDHPHGGGEGRNFGKHPVTPWGVQTKGKKTRHNKR) is disordered. The span at 253–262 (KGKKTRHNKR) shows a compositional bias: basic residues.

It belongs to the universal ribosomal protein uL2 family. In terms of assembly, part of the 50S ribosomal subunit. Forms a bridge to the 30S subunit in the 70S ribosome.

One of the primary rRNA binding proteins. Required for association of the 30S and 50S subunits to form the 70S ribosome, for tRNA binding and peptide bond formation. It has been suggested to have peptidyltransferase activity; this is somewhat controversial. Makes several contacts with the 16S rRNA in the 70S ribosome. This Haemophilus ducreyi (strain 35000HP / ATCC 700724) protein is Large ribosomal subunit protein uL2.